Reading from the N-terminus, the 433-residue chain is 3-phosphoshikimate 1-carboxyvinyltransferase (433 aa).

Residues K22, S23, and R27 each contribute to the 3-phosphoshikimate site. K22 is a phosphoenolpyruvate binding site. Positions 95 and 123 each coordinate phosphoenolpyruvate. Residues S167, Q169, D315, and K342 each contribute to the 3-phosphoshikimate site. Residue Q169 participates in phosphoenolpyruvate binding. The active-site Proton acceptor is D315. 2 residues coordinate phosphoenolpyruvate: R346 and R387.

This sequence belongs to the EPSP synthase family. In terms of assembly, monomer.

It is found in the cytoplasm. The enzyme catalyses 3-phosphoshikimate + phosphoenolpyruvate = 5-O-(1-carboxyvinyl)-3-phosphoshikimate + phosphate. Its pathway is metabolic intermediate biosynthesis; chorismate biosynthesis; chorismate from D-erythrose 4-phosphate and phosphoenolpyruvate: step 6/7. Functionally, catalyzes the transfer of the enolpyruvyl moiety of phosphoenolpyruvate (PEP) to the 5-hydroxyl of shikimate-3-phosphate (S3P) to produce enolpyruvyl shikimate-3-phosphate and inorganic phosphate. This chain is 3-phosphoshikimate 1-carboxyvinyltransferase, found in Legionella pneumophila (strain Lens).